Consider the following 234-residue polypeptide: Glucosamine-6-phosphate deaminase (234 aa).

The active-site Proton acceptor; for enolization step is D62. Catalysis depends on N128, which acts as the For ring-opening step. H130 serves as the catalytic Proton acceptor; for ring-opening step. The For ring-opening step role is filled by E135.

This sequence belongs to the glucosamine/galactosamine-6-phosphate isomerase family. NagB subfamily.

The enzyme catalyses alpha-D-glucosamine 6-phosphate + H2O = beta-D-fructose 6-phosphate + NH4(+). It participates in amino-sugar metabolism; N-acetylneuraminate degradation; D-fructose 6-phosphate from N-acetylneuraminate: step 5/5. Functionally, catalyzes the reversible isomerization-deamination of glucosamine 6-phosphate (GlcN6P) to form fructose 6-phosphate (Fru6P) and ammonium ion. This Streptococcus equi subsp. equi (strain 4047) protein is Glucosamine-6-phosphate deaminase.